The following is a 475-amino-acid chain: Exodeoxyribonuclease 7 large subunit (475 aa).

Belongs to the XseA family. Heterooligomer composed of large and small subunits.

It is found in the cytoplasm. It catalyses the reaction Exonucleolytic cleavage in either 5'- to 3'- or 3'- to 5'-direction to yield nucleoside 5'-phosphates.. In terms of biological role, bidirectionally degrades single-stranded DNA into large acid-insoluble oligonucleotides, which are then degraded further into small acid-soluble oligonucleotides. The protein is Exodeoxyribonuclease 7 large subunit of Bartonella henselae (strain ATCC 49882 / DSM 28221 / CCUG 30454 / Houston 1) (Rochalimaea henselae).